The following is a 532-amino-acid chain: Glutamate--cysteine ligase (532 aa).

This sequence belongs to the glutamate--cysteine ligase type 1 family. Type 1 subfamily.

It carries out the reaction L-cysteine + L-glutamate + ATP = gamma-L-glutamyl-L-cysteine + ADP + phosphate + H(+). It functions in the pathway sulfur metabolism; glutathione biosynthesis; glutathione from L-cysteine and L-glutamate: step 1/2. In Pseudomonas fluorescens (strain ATCC BAA-477 / NRRL B-23932 / Pf-5), this protein is Glutamate--cysteine ligase.